A 1115-amino-acid polypeptide reads, in one-letter code: Phytochrome E (1115 aa).

The GAF domain maps to 213–383 (DIGTLCDTVV…AFSLQLYMEL (171 aa)). Cys-318 lines the phytochromobilin pocket. A PAS 1 domain is found at 598–669 (MALELVRLVE…ALMCRALQGE (72 aa)). Positions 672–728 (RNVEVKLLKFGNHPTKEVVYLVVNACTSRDYKNDIIGVCFVGQDITPEKAVMDKFVR) constitute a PAC domain. Residues 732 to 803 (DYEAIIQSLN…DALTKFMILL (72 aa)) enclose the PAS 2 domain. The Histidine kinase domain occupies 880-1100 (YIQQQMKNPL…YFLIDLDFKT (221 aa)).

Belongs to the phytochrome family. As to quaternary structure, homodimer. In terms of processing, contains one covalently linked phytochromobilin chromophore.

In terms of biological role, regulatory photoreceptor which exists in two forms that are reversibly interconvertible by light: the Pr form that absorbs maximally in the red region of the spectrum and the Pfr form that absorbs maximally in the far-red region. Photoconversion of Pr to Pfr induces an array of morphogenic responses, whereas reconversion of Pfr to Pr cancels the induction of those responses. Pfr controls the expression of a number of nuclear genes including those encoding the small subunit of ribulose-bisphosphate carboxylase, chlorophyll A/B binding protein, protochlorophyllide reductase, rRNA, etc. It also controls the expression of its own gene(s) in a negative feedback fashion. The polypeptide is Phytochrome E (PHYE) (Ipomoea nil (Japanese morning glory)).